The primary structure comprises 247 residues: 1-(5-phosphoribosyl)-5-[(5-phosphoribosylamino)methylideneamino] imidazole-4-carboxamide isomerase (247 aa).

Asp-8 (proton acceptor) is an active-site residue. Asp-131 (proton donor) is an active-site residue.

Belongs to the HisA/HisF family.

Its subcellular location is the cytoplasm. The enzyme catalyses 1-(5-phospho-beta-D-ribosyl)-5-[(5-phospho-beta-D-ribosylamino)methylideneamino]imidazole-4-carboxamide = 5-[(5-phospho-1-deoxy-D-ribulos-1-ylimino)methylamino]-1-(5-phospho-beta-D-ribosyl)imidazole-4-carboxamide. The protein operates within amino-acid biosynthesis; L-histidine biosynthesis; L-histidine from 5-phospho-alpha-D-ribose 1-diphosphate: step 4/9. In Acidovorax sp. (strain JS42), this protein is 1-(5-phosphoribosyl)-5-[(5-phosphoribosylamino)methylideneamino] imidazole-4-carboxamide isomerase.